The primary structure comprises 185 residues: UPF0397 protein PAM_019 (185 aa).

The next 5 helical transmembrane spans lie at 13–33 (IGLS…PVGF), 42–62 (AFLA…VGLI), 69–89 (FILF…IGFI), 109–129 (IVYF…FFAP), and 143–163 (VYLQ…VVGI).

Belongs to the UPF0397 family.

Its subcellular location is the cell membrane. This chain is UPF0397 protein PAM_019, found in Onion yellows phytoplasma (strain OY-M).